A 316-amino-acid chain; its full sequence is Probable inactive poly [ADP-ribose] polymerase SRO4 (316 aa).

Residues 1–28 (MDYSKTEETPINEEQGSTNSSESRSNEE) form a disordered region. The segment covering 14–23 (EQGSTNSSES) has biased composition (low complexity). The region spanning 28 to 255 (ELFSDCDQQH…KSPWISFPVL (228 aa)) is the PARP catalytic domain. Residues 243 to 314 (KNPKSPWISF…IKSVGQKVHK (72 aa)) enclose the RST domain.

It is found in the nucleus. Functionally, probable inactive ADP-ribosyltransferase that may be involved in stress and developmental responses. The polypeptide is Probable inactive poly [ADP-ribose] polymerase SRO4 (SRO4) (Arabidopsis thaliana (Mouse-ear cress)).